A 565-amino-acid polypeptide reads, in one-letter code: MTAAHKQKAKLLAWLKLILWGDSISQRIFHFYIYCILLGAVLLFLPFALKTDYQKVISYEVDLQGHTISKQTASYGFLDALFLAVSAFSDTGLSTTVVSETYSVFGQTVLAILLQLGGIGFVVIAFLVWRLFKLHKKGKYSFYEKLMLQSERGGSKLGTTSEMIVVSVLFLFMVELLYGFLYTILFYFIPAFESASVFQSSGKVSNQLKALIVDSTKRLPVVHNLNLAFQYGFFHSLSAVNNAGIDLLGANSFAPYRTNWGIVIQWLAISQIIFGGIGYPVLFDAYEAIKKRRLYGKYYKHQFSLFTKLAVLTNLIVTAWCFLMLLMVEFIVITSLTNTIAHLNVEKAYLVEGLKNKSNQELQSLIFGPIPAASRVMQLWFGVISSRSAGFSVFPWSAESDIIKGIMVIAMFIGGSPSSTAGGIRTTTLAVIFLTLKAKFRGQKEVKVFKRSIDGQTVINAFLVAVFGLVSVVLIAILLPLSMQQPLSFVDSLFETTSAFGTVGLSSGATKIMALEPTRNLFNYLTLGLLMIMGQVGVSSSVLTFVKKHPQGNSFSYPREDVKVG.

The next 10 membrane-spanning stretches (helical) occupy residues 28-48, 73-93, 109-129, 169-189, 262-282, 315-335, 364-384, 393-413, 461-481, and 526-546; these read IFHF…LPFA, ASYG…DTGL, VLAI…FLVW, LFLF…FYFI, IVIQ…YPVL, LIVT…VITS, SLIF…FGVI, VFPW…AMFI, AFLV…LLPL, and TLGL…LTFV.

It belongs to the TrkH potassium transport family.

It is found in the cell membrane. This is an uncharacterized protein from Mycoplasma pneumoniae (strain ATCC 29342 / M129 / Subtype 1) (Mycoplasmoides pneumoniae).